Consider the following 120-residue polypeptide: Ribosome-binding factor A (120 aa).

Belongs to the RbfA family. In terms of assembly, monomer. Binds 30S ribosomal subunits, but not 50S ribosomal subunits or 70S ribosomes.

Its subcellular location is the cytoplasm. Functionally, one of several proteins that assist in the late maturation steps of the functional core of the 30S ribosomal subunit. Associates with free 30S ribosomal subunits (but not with 30S subunits that are part of 70S ribosomes or polysomes). Required for efficient processing of 16S rRNA. May interact with the 5'-terminal helix region of 16S rRNA. This Rickettsia conorii (strain ATCC VR-613 / Malish 7) protein is Ribosome-binding factor A.